We begin with the raw amino-acid sequence, 459 residues long: Beta-glucosidase (459 aa).

The Proton donor role is filled by Glu-171. Glu-359 functions as the Nucleophile in the catalytic mechanism.

This sequence belongs to the glycosyl hydrolase 1 family.

The enzyme catalyses Hydrolysis of terminal, non-reducing beta-D-glucosyl residues with release of beta-D-glucose.. The chain is Beta-glucosidase (abg) from Agrobacterium sp. (strain ATCC 21400).